Consider the following 470-residue polypeptide: Argininosuccinate lyase (470 aa).

The protein belongs to the lyase 1 family. Argininosuccinate lyase subfamily.

The protein resides in the cytoplasm. It carries out the reaction 2-(N(omega)-L-arginino)succinate = fumarate + L-arginine. The protein operates within amino-acid biosynthesis; L-arginine biosynthesis; L-arginine from L-ornithine and carbamoyl phosphate: step 3/3. This chain is Argininosuccinate lyase, found in Mycobacterium tuberculosis (strain ATCC 25618 / H37Rv).